The following is a 1086-amino-acid chain: DNA polymerase delta catalytic subunit (1086 aa).

The segment at 1–64 (MTDRSSNEGV…KTSSFEDELA (64 aa)) is disordered. The span at 29–58 (EITDVKRRRLSERNGYGDKKGSSSKEKTSS) shows a compositional bias: basic and acidic residues. Residues cysteine 993, cysteine 996, cysteine 1008, and cysteine 1011 each coordinate Zn(2+). The CysA-type zinc-finger motif lies at 993–1011 (CLGCKAPIKKGKTALCENC). [4Fe-4S] cluster contacts are provided by cysteine 1040, cysteine 1043, cysteine 1053, and cysteine 1058. The CysB motif motif lies at 1040 to 1058 (CQRCQGSMHQDVICTSRDC).

Belongs to the DNA polymerase type-B family. In terms of assembly, heterotetramer that consist of the pol3, cdc1, cdc27 and cdm1 subunits. The pol3 subunit contains the polymerase active site and most likely the active site for the 3'-5' exonuclease activity. It depends on [4Fe-4S] cluster as a cofactor.

It is found in the nucleus. The enzyme catalyses DNA(n) + a 2'-deoxyribonucleoside 5'-triphosphate = DNA(n+1) + diphosphate. Its function is as follows. Catalytic component of DNA polymerase delta (DNA polymerase III) which participates in chromosomal DNA replication. Required during synthesis of the lagging DNA strands at the replication fork, binds at/or near replication origins and moves along DNA with the replication fork. Participates in leading strand synthesis during replication initiation and termination. Has 3'-5' proofreading exonuclease activity that corrects errors arising during DNA replication. The chain is DNA polymerase delta catalytic subunit (pol3) from Schizosaccharomyces pombe (strain 972 / ATCC 24843) (Fission yeast).